The following is a 125-amino-acid chain: Large-conductance mechanosensitive channel (125 aa).

A run of 3 helical transmembrane segments spans residues 19-39 (VGVI…SNLI), 42-62 (LIGI…IGSA), and 67-87 (GSFL…FLMV).

Belongs to the MscL family. Homopentamer.

It is found in the cell membrane. Functionally, channel that opens in response to stretch forces in the membrane lipid bilayer. May participate in the regulation of osmotic pressure changes within the cell. In Limosilactobacillus fermentum (strain NBRC 3956 / LMG 18251) (Lactobacillus fermentum), this protein is Large-conductance mechanosensitive channel.